Here is a 396-residue protein sequence, read N- to C-terminus: Tryptophan synthase beta chain (396 aa).

Lys-86 carries the post-translational modification N6-(pyridoxal phosphate)lysine.

The protein belongs to the TrpB family. As to quaternary structure, tetramer of two alpha and two beta chains. Pyridoxal 5'-phosphate serves as cofactor.

The enzyme catalyses (1S,2R)-1-C-(indol-3-yl)glycerol 3-phosphate + L-serine = D-glyceraldehyde 3-phosphate + L-tryptophan + H2O. It functions in the pathway amino-acid biosynthesis; L-tryptophan biosynthesis; L-tryptophan from chorismate: step 5/5. The beta subunit is responsible for the synthesis of L-tryptophan from indole and L-serine. This chain is Tryptophan synthase beta chain, found in Serratia proteamaculans (strain 568).